We begin with the raw amino-acid sequence, 356 residues long: Homoserine O-acetyltransferase (356 aa).

Residues 50-335 (NVILVCHALT…DEPYGHDAFL (286 aa)) enclose the AB hydrolase-1 domain. The active-site Nucleophile is S146. R215 is a substrate binding site. Active-site residues include D302 and H331. D332 is a substrate binding site.

This sequence belongs to the AB hydrolase superfamily. MetX family. In terms of assembly, homodimer.

It localises to the cytoplasm. It carries out the reaction L-homoserine + acetyl-CoA = O-acetyl-L-homoserine + CoA. It functions in the pathway amino-acid biosynthesis; L-methionine biosynthesis via de novo pathway; O-acetyl-L-homoserine from L-homoserine: step 1/1. Transfers an acetyl group from acetyl-CoA to L-homoserine, forming acetyl-L-homoserine. The protein is Homoserine O-acetyltransferase of Chlorobaculum parvum (strain DSM 263 / NCIMB 8327) (Chlorobium vibrioforme subsp. thiosulfatophilum).